The sequence spans 86 residues: MDPYKVIIRPLVTEKAVSLIEKENKLTFIVDRKATKQDIKRAVEEMFNVKVEKVNTLITMKGEKKAYVKLRPEYNASEIAARLGLF.

The protein belongs to the universal ribosomal protein uL23 family. Part of the 50S ribosomal subunit. Contacts protein L29.

Binds to 23S rRNA. One of the proteins that surrounds the polypeptide exit tunnel on the outside of the ribosome. This chain is Large ribosomal subunit protein uL23, found in Thermococcus gammatolerans (strain DSM 15229 / JCM 11827 / EJ3).